We begin with the raw amino-acid sequence, 443 residues long: Thymidine phosphorylase (443 aa).

This sequence belongs to the thymidine/pyrimidine-nucleoside phosphorylase family. Homodimer.

It catalyses the reaction thymidine + phosphate = 2-deoxy-alpha-D-ribose 1-phosphate + thymine. The protein operates within pyrimidine metabolism; dTMP biosynthesis via salvage pathway; dTMP from thymine: step 1/2. In terms of biological role, the enzymes which catalyze the reversible phosphorolysis of pyrimidine nucleosides are involved in the degradation of these compounds and in their utilization as carbon and energy sources, or in the rescue of pyrimidine bases for nucleotide synthesis. This is Thymidine phosphorylase from Aeromonas hydrophila subsp. hydrophila (strain ATCC 7966 / DSM 30187 / BCRC 13018 / CCUG 14551 / JCM 1027 / KCTC 2358 / NCIMB 9240 / NCTC 8049).